We begin with the raw amino-acid sequence, 90 residues long: Small ribosomal subunit protein bS16 (90 aa).

Belongs to the bacterial ribosomal protein bS16 family.

This Listeria monocytogenes serotype 4b (strain F2365) protein is Small ribosomal subunit protein bS16.